Consider the following 358-residue polypeptide: Peptide chain release factor 1 (358 aa).

Gln-235 is subject to N5-methylglutamine.

The protein belongs to the prokaryotic/mitochondrial release factor family. Methylated by PrmC. Methylation increases the termination efficiency of RF1.

It is found in the cytoplasm. In terms of biological role, peptide chain release factor 1 directs the termination of translation in response to the peptide chain termination codons UAG and UAA. The chain is Peptide chain release factor 1 from Neisseria meningitidis serogroup C (strain 053442).